A 250-amino-acid polypeptide reads, in one-letter code: Acetylglutamate kinase (250 aa).

Substrate is bound by residues 41-42 (GG), Arg63, and Asn156.

It belongs to the acetylglutamate kinase family. ArgB subfamily.

The protein localises to the cytoplasm. The enzyme catalyses N-acetyl-L-glutamate + ATP = N-acetyl-L-glutamyl 5-phosphate + ADP. It participates in amino-acid biosynthesis; L-arginine biosynthesis; N(2)-acetyl-L-ornithine from L-glutamate: step 2/4. Functionally, catalyzes the ATP-dependent phosphorylation of N-acetyl-L-glutamate. In Listeria welshimeri serovar 6b (strain ATCC 35897 / DSM 20650 / CCUG 15529 / CIP 8149 / NCTC 11857 / SLCC 5334 / V8), this protein is Acetylglutamate kinase.